A 657-amino-acid chain; its full sequence is Probable alpha-galactosidase D (657 aa).

An N-terminal signal peptide occupies residues 1–16 (MLPKIFYLSLLPAALG). Residues Asn-47 and Asn-91 are each glycosylated (N-linked (GlcNAc...) asparagine). Cys-124 and Cys-157 are oxidised to a cystine. The Nucleophile role is filled by Asp-155. Asn-182 and Asn-191 each carry an N-linked (GlcNAc...) asparagine glycan. Substrate is bound at residue 200–204 (EWGID). Asp-222 functions as the Proton donor in the catalytic mechanism. N-linked (GlcNAc...) asparagine glycosylation is found at Asn-291, Asn-438, Asn-460, Asn-505, Asn-539, Asn-543, and Asn-582.

This sequence belongs to the glycosyl hydrolase 27 family.

It localises to the secreted. The catalysed reaction is Hydrolysis of terminal, non-reducing alpha-D-galactose residues in alpha-D-galactosides, including galactose oligosaccharides, galactomannans and galactolipids.. In terms of biological role, hydrolyzes a variety of simple alpha-D-galactoside as well as more complex molecules such as oligosaccharides and polysaccharides. The protein is Probable alpha-galactosidase D (aglD) of Aspergillus oryzae (strain ATCC 42149 / RIB 40) (Yellow koji mold).